The sequence spans 422 residues: Metallocarboxypeptidase A (422 aa).

Positions methionine 1–alanine 17 are cleaved as a signal peptide. Residues alanine 18 to proline 112 constitute a propeptide, activation peptide. Residues serine 119–valine 419 enclose the Peptidase M14 domain. Histidine 179 and glutamate 182 together coordinate Zn(2+). Residues histidine 179–glutamate 182, arginine 237, and asparagine 254–arginine 255 each bind substrate. Cysteine 248 and cysteine 271 are disulfide-bonded. Histidine 309 contributes to the Zn(2+) binding site. Serine 310–tyrosine 311 serves as a coordination point for substrate. Catalysis depends on glutamate 385, which acts as the Proton donor/acceptor.

This sequence belongs to the peptidase M14 family. Zn(2+) serves as cofactor.

The protein resides in the secreted. In terms of biological role, extracellular metalloprotease that contributes to pathogenicity. The chain is Metallocarboxypeptidase A (MCPA) from Trichophyton tonsurans (Scalp ringworm fungus).